The chain runs to 249 residues: Vitamin B12 import ATP-binding protein BtuD (249 aa).

Residues 1–233 enclose the ABC transporter domain; it reads MSIVMQLQDV…PNLAQAYGMN (233 aa). 33–40 is an ATP binding site; that stretch reads GPNGAGKS.

It belongs to the ABC transporter superfamily. Vitamin B12 importer (TC 3.A.1.13.1) family. The complex is composed of two ATP-binding proteins (BtuD), two transmembrane proteins (BtuC) and a solute-binding protein (BtuF).

It localises to the cell inner membrane. It catalyses the reaction an R-cob(III)alamin(out) + ATP + H2O = an R-cob(III)alamin(in) + ADP + phosphate + H(+). Part of the ABC transporter complex BtuCDF involved in vitamin B12 import. Responsible for energy coupling to the transport system. The chain is Vitamin B12 import ATP-binding protein BtuD from Escherichia coli (strain K12 / DH10B).